Reading from the N-terminus, the 365-residue chain is Chloroplast protein FOR GROWTH AND FERTILITY 1 (365 aa).

2 disordered regions span residues 1-30 (MERL…LPRL) and 62-90 (YTPI…PGFL). The transit peptide at 1–79 (MERLLQPSSS…TNNSFNGSPK (79 aa)) directs the protein to the chloroplast. Low complexity-rich tracts occupy residues 7–24 (PSSS…SRTS) and 62–77 (YTPI…FNGS). The next 7 helical transmembrane spans lie at 109–129 (VILI…PPAF), 139–159 (GWLT…LSGP), 182–202 (ALWG…FLLL), 218–238 (IVGL…SEIP), 274–294 (GVVH…LALP), 301–321 (AFLI…TAFI), and 345–365 (LVAI…FSLY).

In terms of tissue distribution, mostly expressed in leaves and flowers, to a lower extent, in stems, roots, floral bud, inflorescence and siliques, and, barely, in seedlings.

It is found in the plastid. It localises to the chloroplast membrane. The protein resides in the plastid membrane. Functionally, together with CGF2, essential protein which supports female gametogenesis and embryogenesis, probably by securing local energy supply. This Arabidopsis thaliana (Mouse-ear cress) protein is Chloroplast protein FOR GROWTH AND FERTILITY 1.